Here is a 76-residue protein sequence, read N- to C-terminus: U7-lycotoxin-Ls1c (76 aa).

A signal peptide spans 1–22; it reads MKLIIFTGLALFLLVSLIDVEA. Positions 23–26 are excised as a propeptide; the sequence is QNEG.

The protein belongs to the neurotoxin 19 (CSTX) family. 07 (U7-Lctx) subfamily. Contains 4 disulfide bonds. In terms of tissue distribution, expressed by the venom gland.

Its subcellular location is the secreted. The protein is U7-lycotoxin-Ls1c of Lycosa singoriensis (Wolf spider).